Here is a 968-residue protein sequence, read N- to C-terminus: RNA polymerase-associated protein RapA (968 aa).

Residues 164–334 (EVGQRHAPRV…FARLRLLDPN (171 aa)) enclose the Helicase ATP-binding domain. Position 177–184 (177–184 (DEVGLGKT)) interacts with ATP. The DEAH box signature appears at 280–283 (DEAH). The Helicase C-terminal domain maps to 493–644 (WLVDFLLDLR…TCPTGRALYD (152 aa)).

The protein belongs to the SNF2/RAD54 helicase family. RapA subfamily. As to quaternary structure, interacts with the RNAP. Has a higher affinity for the core RNAP than for the holoenzyme. Its ATPase activity is stimulated by binding to RNAP.

Functionally, transcription regulator that activates transcription by stimulating RNA polymerase (RNAP) recycling in case of stress conditions such as supercoiled DNA or high salt concentrations. Probably acts by releasing the RNAP, when it is trapped or immobilized on tightly supercoiled DNA. Does not activate transcription on linear DNA. Probably not involved in DNA repair. This chain is RNA polymerase-associated protein RapA, found in Sodalis glossinidius (strain morsitans).